A 718-amino-acid chain; its full sequence is Auxin response factor 2 (718 aa).

The interval 1–24 (MVGIDLNTVEEEEDEEEGGATGTV) is disordered. Residues 8 to 18 (TVEEEEDEEEG) are compositionally biased toward acidic residues. Positions 147 to 249 (FCKTLTASDT…ELRLGVRRAA (103 aa)) form a DNA-binding region, TF-B3.

The protein belongs to the ARF family. Homo and heterodimers. In terms of tissue distribution, expressed in roots, culms, leaves and young panicles.

It is found in the nucleus. In terms of biological role, auxin response factors (ARFs) are transcriptional factors that bind specifically to the DNA sequence 5'-TGTCTC-3' found in the auxin-responsive promoter elements (AuxREs). This Oryza sativa subsp. japonica (Rice) protein is Auxin response factor 2 (ARF2).